The primary structure comprises 601 residues: Glutamine--fructose-6-phosphate aminotransferase [isomerizing] (601 aa).

Cys-2 acts as the Nucleophile; for GATase activity in catalysis. In terms of domain architecture, Glutamine amidotransferase type-2 spans 2-216 (CGIVGYIGTN…DKEIVIVTKD (215 aa)). SIS domains are found at residues 282–421 (ILDE…EIGD) and 453–591 (IAGE…VDKP). Catalysis depends on Lys-596, which acts as the For Fru-6P isomerization activity.

As to quaternary structure, homodimer.

It is found in the cytoplasm. It catalyses the reaction D-fructose 6-phosphate + L-glutamine = D-glucosamine 6-phosphate + L-glutamate. Functionally, catalyzes the first step in hexosamine metabolism, converting fructose-6P into glucosamine-6P using glutamine as a nitrogen source. The protein is Glutamine--fructose-6-phosphate aminotransferase [isomerizing] of Listeria innocua serovar 6a (strain ATCC BAA-680 / CLIP 11262).